Reading from the N-terminus, the 380-residue chain is Flap endonuclease 1-A (380 aa).

Residues 1–105 (MGIKGLTKLL…QELAKRYSKR (105 aa)) are N-domain. Residue Asp-34 participates in Mg(2+) binding. DNA is bound at residue Arg-71. Residues Asp-87, Glu-159, Glu-161, Asp-180, and Asp-182 each contribute to the Mg(2+) site. Residues 123–254 (AIEKFSKRTV…QTALKLIRQH (132 aa)) form an I-domain region. Residue Glu-159 coordinates DNA. DNA is bound by residues Gly-232 and Asp-234. Asp-234 contributes to the Mg(2+) binding site. The interval 336–344 (SQGRLESFF) is interaction with PCNA. Residues 351-380 (SVPLKRKDTSEKPTKAVANKKTKGAGGKKK) are disordered. The segment covering 355 to 364 (KRKDTSEKPT) has biased composition (basic and acidic residues). The span at 368–380 (ANKKTKGAGGKKK) shows a compositional bias: basic residues.

This sequence belongs to the XPG/RAD2 endonuclease family. FEN1 subfamily. As to quaternary structure, interacts with PCNA. Three molecules of FEN1 bind to one PCNA trimer with each molecule binding to one PCNA monomer. PCNA stimulates the nuclease activity without altering cleavage specificity. Mg(2+) is required as a cofactor. Phosphorylated. Phosphorylation upon DNA damage induces relocalization to the nuclear plasma. Strongly expressed in proliferating tissues: root and shoot apical meristem, tiller bud, leaf, ligule primordia, marginal meristem of young leaves and panicles. Not expressed in mature leaves when exposed to UV.

The protein localises to the nucleus. Its subcellular location is the nucleolus. It is found in the nucleoplasm. The protein resides in the mitochondrion. Its activity is regulated as follows. Inhibited by NaCl. In terms of biological role, structure-specific nuclease with 5'-flap endonuclease and 5'-3' exonuclease activities involved in DNA replication and repair. During DNA replication, cleaves the 5'-overhanging flap structure that is generated by displacement synthesis when DNA polymerase encounters the 5'-end of a downstream Okazaki fragment. It enters the flap from the 5'-end and then tracks to cleave the flap base, leaving a nick for ligation. Also involved in the long patch base excision repair (LP-BER) pathway, by cleaving within the apurinic/apyrimidinic (AP) site-terminated flap. Acts as a genome stabilization factor that prevents flaps from equilibrating into structures that lead to duplications and deletions. Also possesses 5'-3' exonuclease activity on nicked or gapped double-stranded DNA, and exhibits RNase H activity. Also involved in replication and repair of rDNA and in repairing mitochondrial DNA. May be required for cell proliferation. This chain is Flap endonuclease 1-A, found in Oryza sativa subsp. japonica (Rice).